A 187-amino-acid polypeptide reads, in one-letter code: uncharacterized protein (187 aa).

This is an uncharacterized protein from Dictyostelium discoideum (Social amoeba).